We begin with the raw amino-acid sequence, 535 residues long: D-2-hydroxyglutarate dehydrogenase, mitochondrial (535 aa).

Residues 1-50 (MVLHLVPRWSASLFRASPRWKKTYSQRASAQLKWLGCPRSVYSPLACRAY) constitute a mitochondrion transit peptide. An FAD-binding PCMH-type domain is found at 110–289 (VRGCSKVLLR…TAVSIVCPPR (180 aa)). K115 is subject to N6-succinyllysine. Positions 400, 404, and 415 each coordinate (R)-2-hydroxyglutarate. A (R)-lactate-binding site is contributed by R400. 3 residues coordinate (R)-malate: R400, T404, and K415. The Zn(2+) site is built by H448 and H455. Residue N457 coordinates (R)-2-hydroxyglutarate. Zn(2+) is bound at residue E489. H490 contributes to the (R)-2-hydroxyglutarate binding site. H490 is a (R)-lactate binding site. H490 lines the (R)-malate pocket.

This sequence belongs to the FAD-binding oxidoreductase/transferase type 4 family. Requires FAD as cofactor.

It localises to the mitochondrion. It carries out the reaction (R)-2-hydroxyglutarate + A = 2-oxoglutarate + AH2. The enzyme catalyses (R)-malate + A = oxaloacetate + AH2. Its activity is regulated as follows. Activated by zinc, cobalt and manganese ions. Inhibited by EDTA. Functionally, catalyzes the oxidation of D-2-hydroxyglutarate (D-2-HG) to alpha-ketoglutarate. Also catalyzes the oxidation of other D-2-hydroxyacids, such as D-malate (D-MAL) and D-lactate (D-LAC). Exhibits high activities towards D-2-HG and D-MAL but a very weak activity towards D-LAC. The sequence is that of D-2-hydroxyglutarate dehydrogenase, mitochondrial from Rattus norvegicus (Rat).